A 179-amino-acid polypeptide reads, in one-letter code: uncharacterized protein (179 aa).

Positions 53-82 (SPEREDPESPTRGVDEVDGACSEPPTPRPE) are disordered. Positions 54–67 (PEREDPESPTRGVD) are enriched in basic and acidic residues.

This is an uncharacterized protein from Ictaluridae (bullhead catfishes).